Here is a 360-residue protein sequence, read N- to C-terminus: DNA replication and repair protein RecF (360 aa).

Gly-30–Thr-37 contributes to the ATP binding site.

The protein belongs to the RecF family.

The protein localises to the cytoplasm. Its function is as follows. The RecF protein is involved in DNA metabolism; it is required for DNA replication and normal SOS inducibility. RecF binds preferentially to single-stranded, linear DNA. It also seems to bind ATP. The chain is DNA replication and repair protein RecF from Acinetobacter baumannii (strain AB307-0294).